Reading from the N-terminus, the 444-residue chain is Protein giant-lens (444 aa).

The signal sequence occupies residues 1–24 (MPTTLMLLPCMLLLLLTAAAVAVG). Two-fingered domain 1 part repeat units lie at residues 123-165 (RDVR…CRCP) and 285-307 (CPSS…YKMC). 8 disulfide bridges follow: Cys141/Cys162, Cys147/Cys285, Cys164/Cys307, Cys316/Cys341, Cys343/Cys370, Cys378/Cys405, Cys384/Cys413, and Cys407/Cys440. Two-fingered domain repeat units follow at residues 316-370 (CTHF…LFAC) and 378-444 (CQRK…MAND). The N-linked (GlcNAc...) asparagine glycan is linked to Asn333.

Interacts with spi. As to expression, during embryogenesis, expression is in a segmental pattern in the ectoderm and in the nervous system. In the eye imaginal disks, expression in photoreceptor cells begins a few rows posterior to the morphogenetic furrow. Also expressed in the wing disk. In the adult, expression is seen in the retina and lamina.

It localises to the secreted. Functionally, regulates cell determination; development of ommatidia and optic lobe. Is a signaling molecule involved in the process of axon pathfinding in the eye. Part of the Ras pathway regulating programmed cell death in pupal eyes; activated by lozenge (lz). Antagonist for the Egfr receptor (gurken). Inhibits Egfr signaling without interacting directly with the receptor, but instead by sequestering the Egfr-activating ligand spitz (spi). This is Protein giant-lens (aos) from Drosophila melanogaster (Fruit fly).